The chain runs to 577 residues: Sulfite reductase [NADPH] hemoprotein beta-component (577 aa).

The [4Fe-4S] cluster site is built by C440, C446, C486, and C490. C490 lines the siroheme pocket.

Belongs to the nitrite and sulfite reductase 4Fe-4S domain family. In terms of assembly, alpha(8)-beta(8). The alpha component is a flavoprotein, the beta component is a hemoprotein. Siroheme serves as cofactor. Requires [4Fe-4S] cluster as cofactor.

The catalysed reaction is hydrogen sulfide + 3 NADP(+) + 3 H2O = sulfite + 3 NADPH + 4 H(+). Its pathway is sulfur metabolism; hydrogen sulfide biosynthesis; hydrogen sulfide from sulfite (NADPH route): step 1/1. Functionally, component of the sulfite reductase complex that catalyzes the 6-electron reduction of sulfite to sulfide. This is one of several activities required for the biosynthesis of L-cysteine from sulfate. In Vibrio cholerae serotype O1 (strain ATCC 39315 / El Tor Inaba N16961), this protein is Sulfite reductase [NADPH] hemoprotein beta-component.